Consider the following 311-residue polypeptide: E3 ubiquitin-protein ligase RNF126 (311 aa).

N-acetylalanine is present on Ala2. Phosphoserine is present on Ser5. The tract at residues Ser5–Ala100 is required for interaction with BAG6. The Zn(2+) site is built by Cys13, Cys16, Cys29, and Cys32. The segment at Cys13 to Cys32 adopts a C4-type zinc-finger fold. 2 disordered regions span residues Glu42–Pro64 and Pro94–Thr132. Positions Thr47 to Ser61 are enriched in polar residues. The span at Asp103 to His116 shows a compositional bias: basic and acidic residues. Residues Pro117 to Thr132 show a composition bias toward basic residues. Positions Thr200–Asn304 are sufficient for interaction with AICDA. The RING-type zinc-finger motif lies at Cys229 to Arg270. The tract at residues Asn277 to Ser311 is disordered. Over residues Ser289–Ser311 the composition is skewed to low complexity.

In terms of assembly, interacts with CCDC50, EGFR, FLT3 and SCAMP3. Interacts with BAG6 (via ubiquitin-like domain); required for BAG6-dependent ubiquitination of proteins mislocalized to the cytosol. Interacts with CDKN1A. Interacts with AICDA. Ubiquitinated. May undergo autoubiquitination. Highly expressed in liver and testis.

It localises to the cytoplasm. The protein resides in the nucleus. The catalysed reaction is S-ubiquitinyl-[E2 ubiquitin-conjugating enzyme]-L-cysteine + [acceptor protein]-L-lysine = [E2 ubiquitin-conjugating enzyme]-L-cysteine + N(6)-ubiquitinyl-[acceptor protein]-L-lysine.. The protein operates within protein modification; protein ubiquitination. Functionally, E3 ubiquitin-protein ligase that mediates ubiquitination oF target proteins. Depending on the associated E2 ligase, mediates 'Lys-27'-, 'Lys-29'-, 'Lys-48'- and/or 'Lys-63'-linked polyubiquitination of substrates. Part of a BAG6-dependent quality control process ensuring that proteins of the secretory pathway that are mislocalized to the cytosol are degraded by the proteasome. Probably acts by providing the ubiquitin ligase activity associated with the BAG6 complex and be responsible for ubiquitination of the hydrophobic mislocalized proteins and their targeting to the proteasome. May also play a role in the endosomal recycling of IGF2R, the cation-independent mannose-6-phosphate receptor. May play a role in the endosomal sorting and degradation of several membrane receptors including EGFR, FLT3, MET and CXCR4, by mediating their ubiquitination. By ubiquitinating CDKN1A/p21 and targeting it for degradation, may also promote cell proliferation. May monoubiquitinate AICDA. Acts as a regulator of DNA repair by mediating 'Lys-27'- and 'Lys-29'-linked polyubiquitination of MRE11, thereby promoting the exonuclease activity of MRE11. The sequence is that of E3 ubiquitin-protein ligase RNF126 from Homo sapiens (Human).